A 541-amino-acid chain; its full sequence is Zinc finger CCHC domain-containing protein 7 (541 aa).

Positions 111 to 144 (AEEKTQSPATSHSNKVAQKCKRNNKKPKPEERPG) are disordered. Residues 116-126 (QSPATSHSNKV) are compositionally biased toward polar residues. Glycyl lysine isopeptide (Lys-Gly) (interchain with G-Cter in SUMO2) cross-links involve residues lysine 129, lysine 136, lysine 138, lysine 234, and lysine 249. 3 CCHC-type zinc fingers span residues 236-253 (VTCR…NCPL), 258-275 (RACC…GCPA), and 299-316 (KRCD…ACPE). A Glycyl lysine isopeptide (Lys-Gly) (interchain with G-Cter in SUMO2) cross-link involves residue lysine 334. The segment at 343-360 (VYCYNCAQKGHYGHECTE) adopts a CCHC-type 4 zinc-finger fold. The interval 394–541 (VKDLKKNGDF…KKKKPKPSGL (148 aa)) is disordered. Glycyl lysine isopeptide (Lys-Gly) (interchain with G-Cter in SUMO2) cross-links involve residues lysine 408 and lysine 431. The span at 418–434 (RRHHDMRKSRSPRKYRR) shows a compositional bias: basic residues. A compositionally biased stretch (basic and acidic residues) spans 435-452 (WPRENKETQKEKTRSREG). A Glycyl lysine isopeptide (Lys-Gly) (interchain with G-Cter in SUMO2) cross-link involves residue lysine 473. Positions 474-486 (PNASGCANNQKPS) are enriched in polar residues. Serine 477 is subject to Phosphoserine. Glycyl lysine isopeptide (Lys-Gly) (interchain with G-Cter in SUMO2) cross-links involve residues lysine 484 and lysine 487. Residues 487 to 497 (KSLHHASHYHR) are compositionally biased toward basic residues. 2 stretches are compositionally biased toward basic and acidic residues: residues 498 to 509 (LREERLLRESKR) and 517 to 527 (STEDGSHDDLF). A Glycyl lysine isopeptide (Lys-Gly) (interchain with G-Cter in SUMO2) cross-link involves residue lysine 530. Residues 530–541 (KQKKKKPKPSGL) show a composition bias toward basic residues.

Component of a nucleolar TRAMP-like complex, an ATP-dependent exosome regulatory complex consisting of a helicase (MTREX), an oligadenylate polymerase (TENT4B or TENT4A), and a substrate specific RNA-binding factor (ZCCHC7 or ZCCHC8). Several TRAMP-like complexes exist with specific compositions and are associated with nuclear, or nucleolar RNA exosomes.

It is found in the nucleus. Its subcellular location is the nucleolus. This is Zinc finger CCHC domain-containing protein 7 (Zcchc7) from Mus musculus (Mouse).